Consider the following 252-residue polypeptide: ATP synthase subunit a (252 aa).

The next 7 helical transmembrane spans lie at 6-26 (LEQF…YFSF), 31-51 (LFML…TLNG), 88-108 (FFPL…IGMI), 117-137 (HFII…IVGF), 144-164 (FFSI…LVLL), 190-212 (LVKI…YLGQ), and 225-245 (LELG…CIYL).

Belongs to the ATPase A chain family. As to quaternary structure, F-type ATPases have 2 components, CF(1) - the catalytic core - and CF(0) - the membrane proton channel. CF(1) has five subunits: alpha(3), beta(3), gamma(1), delta(1), epsilon(1). CF(0) has three main subunits: a, b and c.

The protein resides in the mitochondrion inner membrane. Its function is as follows. Mitochondrial membrane ATP synthase (F(1)F(0) ATP synthase or Complex V) produces ATP from ADP in the presence of a proton gradient across the membrane which is generated by electron transport complexes of the respiratory chain. F-type ATPases consist of two structural domains, F(1) - containing the extramembraneous catalytic core and F(0) - containing the membrane proton channel, linked together by a central stalk and a peripheral stalk. During catalysis, ATP synthesis in the catalytic domain of F(1) is coupled via a rotary mechanism of the central stalk subunits to proton translocation. Key component of the proton channel; it may play a direct role in the translocation of protons across the membrane. In Marchantia polymorpha (Common liverwort), this protein is ATP synthase subunit a (ATP6).